The following is a 393-amino-acid chain: Endoplasmic reticulum junction formation protein lunapark-A (393 aa).

Residues 1–45 (MGAVVSRWRAKPSTVEVLEGLDKDIQVLEEYREKNHKQLKLWVYR) lie on the Cytoplasmic side of the membrane. Residues 46–66 (LLLYSALLYLMACAVVYAWYI) traverse the membrane as a helical segment. Residues 67–69 (PER) are Lumenal-facing. Residues 70–90 (MIGKLIVASPFLLFPLLIWLL) traverse the membrane as a helical segment. Residues 91–393 (RKLLIILYNK…EQDVSAMEVE (303 aa)) lie on the Cytoplasmic side of the membrane. Positions 95–130 (IILYNKRTERNNEKLEELKAEKKKILEQVMETETYK) form a coiled coil. The disordered stretch occupies residues 146–209 (KLELETQPIG…PPEKGLSAST (64 aa)). The span at 176–190 (TGRPPPVPVPGPSVP) shows a compositional bias: pro residues. A C4-type; plays a role in ER morphology zinc finger spans residues 269–294 (CQQCLSHNGMALKEEFEYIAFRCAYC). The interval 314–393 (AAEAKTSQDP…EQDVSAMEVE (80 aa)) is disordered. 2 stretches are compositionally biased toward basic and acidic residues: residues 340-353 (ESKEAGPEPVKAGD) and 364-383 (EEMKPGDPEPHTDIPDKSDG).

It belongs to the lunapark family. Homodimer; homodimerization requires the C4-type zinc finger motif and decreases during mitosis in a phosphorylation-dependent manner. In terms of processing, phosphorylated. Phosphorylation occurs during interphase. Phosphorylation also occurs during mitosis; these phosphorylations reduce both its homodimerization and the ER three-way tubular junction formation.

Its subcellular location is the endoplasmic reticulum membrane. Its function is as follows. Endoplasmic reticulum (ER)-shaping membrane protein that plays a role in determining ER morphology. Involved in the stabilization of nascent three-way ER tubular junctions within the ER network. May also play a role as a curvature-stabilizing protein within three-way ER tubular junction network. This is Endoplasmic reticulum junction formation protein lunapark-A (lnpka) from Danio rerio (Zebrafish).